Reading from the N-terminus, the 37-residue chain is Brevinin-2DYe (37 aa).

Cysteines 31 and 37 form a disulfide.

In terms of tissue distribution, expressed by the skin glands.

Its subcellular location is the secreted. Functionally, antimicrobial peptide. Active against the Gram-positive bacterium S.aureus (MIC=15 uM) and the Gram-negative bacterium E.coli (MIC=30 uM). This chain is Brevinin-2DYe, found in Rana dybowskii (Dybovsky's frog).